Consider the following 724-residue polypeptide: Actin-related protein 5 (724 aa).

Disordered regions lie at residues 358–391 (QSLR…LMNV), 412–450 (TTAE…ESYL), and 467–488 (KKRL…IGRG). The segment covering 414 to 446 (AEGRLRARQKRNEEELEKEKRNQLEEERRRENP) has biased composition (basic and acidic residues). Position 542 is a phosphoserine (Ser-542).

This sequence belongs to the actin family. ARP5 subfamily. Component of the INO80 chromatin-remodeling complex. Interacts with EEN. As to expression, expressed ubiquitously in seedlings, roots, leaves, buds, flowers and siliques.

The protein localises to the nucleus. The protein resides in the nucleoplasm. It localises to the cytoplasm. Functionally, probable subunit of a chromatin-remodeling complex. Involved in DNA repair. Required for multicellular development of all organs. This is Actin-related protein 5 from Arabidopsis thaliana (Mouse-ear cress).